Reading from the N-terminus, the 219-residue chain is Ribosomal RNA small subunit methyltransferase Nep1 (219 aa).

Residues glycine 178, glycine 183, and 196-201 contribute to the S-adenosyl-L-methionine site; that span reads LYKAPL.

Belongs to the class IV-like SAM-binding methyltransferase superfamily. RNA methyltransferase NEP1 family. As to quaternary structure, homodimer.

The enzyme catalyses a pseudouridine in rRNA + S-adenosyl-L-methionine = an N(1)-methylpseudouridine in rRNA + S-adenosyl-L-homocysteine + H(+). In terms of biological role, methyltransferase involved in ribosomal biogenesis. Specifically catalyzes the N1-methylation of the pseudouridine corresponding to position 914 in M.jannaschii 16S rRNA. In Thermococcus onnurineus (strain NA1), this protein is Ribosomal RNA small subunit methyltransferase Nep1.